The primary structure comprises 341 residues: Muscleblind-like protein 1 (341 aa).

Thr-6 carries the post-translational modification Phosphothreonine. 4 consecutive C3H1-type zinc fingers follow at residues Trp-13–Lys-41, Asn-47–Pro-73, Thr-178–Asp-206, and Asp-214–Ala-240.

Belongs to the muscleblind family. In terms of assembly, interacts with DDX1 and YBX1. Interacts with HNRNPH1; the interaction in RNA-independent. Interacts with RBPMS; the interaction allows cooperative assembly of RNA-bound stable cell-specific alternative splicing regulatory complexes. In terms of tissue distribution, highly expressed in cardiac and skeletal muscle. Weakly expressed in heart and eye (at protein level).

The protein resides in the nucleus. It is found in the cytoplasm. The protein localises to the cytoplasmic granule. In terms of biological role, mediates pre-mRNA alternative splicing regulation. Acts either as activator or repressor of splicing on specific pre-mRNA targets. Inhibits cardiac troponin-T (TNNT2) pre-mRNA exon inclusion but induces insulin receptor (IR) pre-mRNA exon inclusion in muscle. Antagonizes the alternative splicing activity pattern of CELF proteins. Regulates the TNNT2 exon 5 skipping through competition with U2AF2. Inhibits the formation of the spliceosome A complex on intron 4 of TNNT2 pre-mRNA. Binds to the stem-loop structure within the polypyrimidine tract of TNNT2 intron 4 during spliceosome assembly. Binds to the 5'-YGCU(U/G)Y-3'consensus sequence. Binds to the IR RNA. Binds to CUG triplet repeat expansion in myotonic dystrophy muscle cells by sequestering the target RNAs. Together with RNA binding proteins RBPMS and RBFOX2, activates vascular smooth muscle cells alternative splicing events. Regulates NCOR2 alternative splicing. This Mus musculus (Mouse) protein is Muscleblind-like protein 1 (Mbnl1).